The following is a 156-amino-acid chain: MSRKNQAPKREVLPDPLYNSKLVTRLINRVMLDGKRGTAASIVYGAFDQIKEATGNDALEVFETAMENIMPVLEVRARRVGGSNYQVPVEVRPERRTTLGLRWLVTIARQRGEHTMVDRLAKEILDASNNTGAAVKKREDTHRMAEANRAFAHFRW.

It belongs to the universal ribosomal protein uS7 family. In terms of assembly, part of the 30S ribosomal subunit. Contacts proteins S9 and S11.

In terms of biological role, one of the primary rRNA binding proteins, it binds directly to 16S rRNA where it nucleates assembly of the head domain of the 30S subunit. Is located at the subunit interface close to the decoding center, probably blocks exit of the E-site tRNA. This chain is Small ribosomal subunit protein uS7, found in Streptococcus sanguinis (strain SK36).